A 163-amino-acid polypeptide reads, in one-letter code: Mating-type protein ALPHA2 (163 aa).

Residues 80–142 (IEKRSKRFPK…NRRRKERTLT (63 aa)) constitute a DNA-binding region (homeobox; TALE-type).

The protein belongs to the TALE/M-ATYP homeobox family.

It is found in the nucleus. Mating type proteins are sequence specific DNA-binding proteins that act as master switches in yeast differentiation by controlling gene expression in a cell type-specific fashion. This chain is Mating-type protein ALPHA2 (MATALPHA2), found in Pichia angusta (Yeast).